The following is a 1337-amino-acid chain: Protein HEG homolog 1 (1337 aa).

The signal sequence occupies residues methionine 1–glycine 31. Low complexity-rich tracts occupy residues alanine 28–alanine 40 and proline 54–alanine 66. Disordered regions lie at residues alanine 28 to alanine 149, serine 175 to glutamate 211, alanine 235 to serine 296, valine 313 to isoleucine 675, leucine 723 to leucine 767, and glutamate 860 to threonine 909. The Extracellular segment spans residues alanine 32–leucine 1204. Polar residues predominate over residues threonine 118–glycine 131. Residues serine 175–serine 190 show a composition bias toward low complexity. 4 stretches are compositionally biased toward polar residues: residues arginine 195–serine 206, valine 247–glutamate 258, isoleucine 283–serine 296, and glycine 340–leucine 361. Positions arginine 470–glycine 480 are enriched in gly residues. Low complexity-rich tracts occupy residues serine 486–serine 502 and serine 556–serine 575. Composition is skewed to polar residues over residues glutamine 576 to serine 585 and alanine 592 to asparagine 617. The span at proline 637 to isoleucine 675 shows a compositional bias: low complexity. Composition is skewed to polar residues over residues proline 725 to lysine 742 and serine 751 to valine 763. Low complexity predominate over residues proline 868–glutamate 884. Residues arginine 885–serine 896 are compositionally biased toward basic and acidic residues. The segment covering proline 897 to threonine 909 has biased composition (polar residues). Positions proline 941–serine 979 constitute an EGF-like 1 domain. Intrachain disulfides connect cysteine 945–cysteine 956, cysteine 950–cysteine 967, cysteine 969–cysteine 978, cysteine 985–cysteine 996, cysteine 990–cysteine 1005, and cysteine 1007–cysteine 1018. Residues aspartate 981–asparagine 1019 enclose the EGF-like 2; calcium-binding domain. Asparagine 1093 carries an N-linked (GlcNAc...) asparagine glycan. A helical membrane pass occupies residues isoleucine 1205 to isoleucine 1225. The Cytoplasmic portion of the chain corresponds to valine 1226–phenylalanine 1337. Position 1315 is a phosphoserine (serine 1315).

In terms of assembly, interacts with CCM2 and KRIT1; KRIT1 markedly facilitates interaction with CCM2.

The protein localises to the cell membrane. The protein resides in the cell junction. Functionally, receptor component of the CCM signaling pathway which is a crucial regulator of heart and vessel formation and integrity. May be acting by stabilizing endothelial cell junctions. The polypeptide is Protein HEG homolog 1 (Heg1) (Mus musculus (Mouse)).